The following is a 746-amino-acid chain: MEHTYQYAYIILFLPLPVTMSIGFGLLFVPTATKNIRRMWAFVSVLLLSMVMGFSVNLAIQQINGSFIYQYLCSWTINNDFSLEFGYLIDPLTSIMSLLISTVGIMVLMYSDNYMSHDQGYLRFFAYMSFFNTSMLGLVTSSNLIQIHIFWELVGMCSYLLIGFWFTRPIAASACQKAFVINRVGDFGLLLGILGFYWITGSLEFRDLFEIVNNLIHNNGVNFRFAILCACLLFLGAVAKSAQFPLHVWLPDAMEGPTPISALIHAATMVAAGIFLVARLRPLFIVIPYIMNLISLIGIITLLLGATLALAQGDIKRSLAYSTVSQLGYIMLALGIGSYRAALFHLITHAYSKALLFLGSGSIIHSMEPVVGYSPDKSQNMVLMGGLKKYVPVTRTTFLLGTLSLCGIPPLACFWSKDEILTDSWLYSPIFAIIAYFTAGLTAFYMFRVYLLTFDGCLRVHFQNYSSTKRSLFCSMSVSVWGREPLKIDNQNLPFLILKRNINNNKVFFFSFFSKGTYKNKIYNNVINRMQYFRTYFQNKYTYMYPHESENTVLFPLLVLVLFTLVVGLIGIPFDQGVIDFDILSKWLTNPFQKNLNHSVDWYEFLTNAIFSVSVSLFGLFIASIFYGSVYSSFQNLDLINFFVKRGPRRILLDQIKNVIYNWSYNRGYIDIFYTKGLTMSIRRLSKLIQFFDRYIIDGITNGIGVASFFIGEGIRYIGGGRISSYLFLYLSYVSIFLIFYQYFDF.

Transmembrane regions (helical) follow at residues 9–29, 40–60, 88–108, 125–145, 147–167, 185–205, 225–245, 258–278, 283–303, 327–347, 354–374, 396–416, 425–445, 554–574, 610–630, and 726–746; these read YIILFLPLPVTMSIGFGLLFV, WAFVSVLLLSMVMGFSVNLAI, LIDPLTSIMSLLISTVGIMVL, FAYMSFFNTSMLGLVTSSNLI, IHIFWELVGMCSYLLIGFWFT, GDFGLLLGILGFYWITGSLEF, FAILCACLLFLGAVAKSAQFP, TPISALIHAATMVAAGIFLVA, LFIVIPYIMNLISLIGIITLL, LGYIMLALGIGSYRAALFHLI, ALLFLGSGSIIHSMEPVVGYS, TTFLLGTLSLCGIPPLACFWS, WLYSPIFAIIAYFTAGLTAFY, LFPLLVLVLFTLVVGLIGIPF, IFSVSVSLFGLFIASIFYGSV, and YLFLYLSYVSIFLIFYQYFDF.

This sequence belongs to the complex I subunit 5 family. In terms of assembly, NDH is composed of at least 16 different subunits, 5 of which are encoded in the nucleus.

Its subcellular location is the plastid. The protein resides in the chloroplast thylakoid membrane. The catalysed reaction is a plastoquinone + NADH + (n+1) H(+)(in) = a plastoquinol + NAD(+) + n H(+)(out). The enzyme catalyses a plastoquinone + NADPH + (n+1) H(+)(in) = a plastoquinol + NADP(+) + n H(+)(out). Its function is as follows. NDH shuttles electrons from NAD(P)H:plastoquinone, via FMN and iron-sulfur (Fe-S) centers, to quinones in the photosynthetic chain and possibly in a chloroplast respiratory chain. The immediate electron acceptor for the enzyme in this species is believed to be plastoquinone. Couples the redox reaction to proton translocation, and thus conserves the redox energy in a proton gradient. In Dioscorea elephantipes (Elephant's foot yam), this protein is NAD(P)H-quinone oxidoreductase subunit 5, chloroplastic (ndhF).